The sequence spans 621 residues: 1-deoxy-D-xylulose-5-phosphate synthase (621 aa).

Residues His-80 and 121–123 contribute to the thiamine diphosphate site; that span reads GHS. Asp-152 contacts Mg(2+). Residues 153–154, Asn-181, Tyr-288, and Glu-371 contribute to the thiamine diphosphate site; that span reads GA. Position 181 (Asn-181) interacts with Mg(2+).

This sequence belongs to the transketolase family. DXPS subfamily. As to quaternary structure, homodimer. Requires Mg(2+) as cofactor. It depends on thiamine diphosphate as a cofactor.

It carries out the reaction D-glyceraldehyde 3-phosphate + pyruvate + H(+) = 1-deoxy-D-xylulose 5-phosphate + CO2. It participates in metabolic intermediate biosynthesis; 1-deoxy-D-xylulose 5-phosphate biosynthesis; 1-deoxy-D-xylulose 5-phosphate from D-glyceraldehyde 3-phosphate and pyruvate: step 1/1. In terms of biological role, catalyzes the acyloin condensation reaction between C atoms 2 and 3 of pyruvate and glyceraldehyde 3-phosphate to yield 1-deoxy-D-xylulose-5-phosphate (DXP). This is 1-deoxy-D-xylulose-5-phosphate synthase from Pectobacterium atrosepticum (strain SCRI 1043 / ATCC BAA-672) (Erwinia carotovora subsp. atroseptica).